Reading from the N-terminus, the 150-residue chain is S-protein homolog 3 (150 aa).

The N-terminal stretch at M1–S23 is a signal peptide. N-linked (GlcNAc...) asparagine glycans are attached at residues N32 and N70.

It belongs to the plant self-incompatibility (S1) protein family.

Its subcellular location is the secreted. In Arabidopsis thaliana (Mouse-ear cress), this protein is S-protein homolog 3.